A 419-amino-acid chain; its full sequence is Glutamyl-tRNA reductase (419 aa).

Substrate is bound by residues 49-52 (TCNR), serine 107, 112-114 (EPQ), and glutamine 118. Cysteine 50 (nucleophile) is an active-site residue. 187–192 (GAGETI) is a binding site for NADP(+).

The protein belongs to the glutamyl-tRNA reductase family. In terms of assembly, homodimer.

It carries out the reaction (S)-4-amino-5-oxopentanoate + tRNA(Glu) + NADP(+) = L-glutamyl-tRNA(Glu) + NADPH + H(+). It participates in porphyrin-containing compound metabolism; protoporphyrin-IX biosynthesis; 5-aminolevulinate from L-glutamyl-tRNA(Glu): step 1/2. In terms of biological role, catalyzes the NADPH-dependent reduction of glutamyl-tRNA(Glu) to glutamate 1-semialdehyde (GSA). In Vibrio vulnificus (strain CMCP6), this protein is Glutamyl-tRNA reductase.